Consider the following 340-residue polypeptide: Adenosine deaminase (340 aa).

The Zn(2+) site is built by histidine 15 and histidine 17. Substrate contacts are provided by histidine 17, aspartate 19, and glycine 172. Histidine 199 provides a ligand contact to Zn(2+). The active-site Proton donor is glutamate 202. Aspartate 279 contacts Zn(2+).

The protein belongs to the metallo-dependent hydrolases superfamily. Adenosine and AMP deaminases family. Adenosine deaminase subfamily. It depends on Zn(2+) as a cofactor.

The enzyme catalyses adenosine + H2O + H(+) = inosine + NH4(+). The catalysed reaction is 2'-deoxyadenosine + H2O + H(+) = 2'-deoxyinosine + NH4(+). In terms of biological role, catalyzes the hydrolytic deamination of adenosine and 2-deoxyadenosine. The sequence is that of Adenosine deaminase from Streptococcus agalactiae serotype Ia (strain ATCC 27591 / A909 / CDC SS700).